The primary structure comprises 995 residues: MGMRPTARMPKLTRRSRVLILIALGVIALLLAGPRLIDAYVDWLWFGELGYRSVFTTVLVTRFLVFLVAGVLVGGIVFAGLALAYRTRPVFVPNNDNDPVARYRTVVLARLRLFGIGIPAAIGLLAGIVAQSYWVRIQLFLHGGDFGITDPQFGKDLGFYAFELPFYRLLLSYLFVAIFLAFVANVVSHYLFGGIRLTGRSGALSRSARIQLVSLVGVLVLLKAVAYWLDRYELLSHTRGGKPFTGAGYTDINAVLPAKLILMAIAVICAAAVFSAIVLRDLRIPAIGLVLLLLSSLIVGAAWPMIVEQISVKPNAAQKESEYISRSITATRQAYGLTSNVVTYRNYTGDGEATAQQVAADRATTSNIRLLDPTIVSPAFTQFQQGKNFYYFPDQLSIDRYFDRNNNLRDYVVAARELNPDRLIDNQRDWINRHTVYTHGNGFIASPANTVRGIANDPNQNGGYPEFLVNVVGANGTVVSDGPAPLDQPRIYYGPVISNTPADYAIVGKTGADREYDYETSADTKNYTYTGSGGVSVGSWISRTVFAAKFAERNFLFSNVIGSNSKILFNRDPAQRVEAVAPWLTTDSAVYPAIVNKRMVWILDGYTTLDNYPYSQLTSLSSATADSNEVAFNRLLPDKQVSYIRNSVKATVDAYDGTVTLYQQDEQDPVLKAWMQVFPGTVKPKGDISPELAAHLRYPEDLFKVQRMLLAKYHVNDPVTFFSTSDFWDVPLDPNPTASSYQPPYYIVAKNIAKNDNSASYQLISAMNRFKRDYLAAYISASSDPATYGKITVLTIPGQVNGPKLANNAITTDPAVSQDLGVIGRDNQNRIRWGNLLTLPVGQGGLLYVEPVYASPGASDAASSYPRLIRVAMMYNDKIGYGPTVRDALNGLFGPGAGDAATGIQPTEGGAPANVPPNNAPSPEALPGTPPSPPTAVPPAPEASVTLSPAKAAAMKEIQSAIGAARDAQKKGDFAAYGAALQRLDDAITKFNNTQ.

A run of 7 helical transmembrane segments spans residues Val18–Asp38, Phe63–Leu83, Leu113–Tyr133, Phe175–Ile195, Ile210–Asp230, Lys259–Leu279, and Ile287–Val307. The interval Ala900–Ser948 is disordered. Residues Gly928–Pro941 are compositionally biased toward pro residues.

The protein belongs to the UPF0182 family.

The protein resides in the cell membrane. In Mycobacterium marinum (strain ATCC BAA-535 / M), this protein is UPF0182 protein MMAR_1371.